The sequence spans 1034 residues: Glycine dehydrogenase (decarboxylating) B, mitochondrial (1034 aa).

A mitochondrion-targeting transit peptide spans 1–63 (MERARRLAIL…LNGFGSQVRT (63 aa)). Lysine 770 carries the N6-(pyridoxal phosphate)lysine modification.

This sequence belongs to the GcvP family. In terms of assembly, homodimer. The glycine cleavage system is composed of four proteins: P, T, L and H. It depends on pyridoxal 5'-phosphate as a cofactor.

The protein resides in the mitochondrion. The enzyme catalyses N(6)-[(R)-lipoyl]-L-lysyl-[glycine-cleavage complex H protein] + glycine + H(+) = N(6)-[(R)-S(8)-aminomethyldihydrolipoyl]-L-lysyl-[glycine-cleavage complex H protein] + CO2. The glycine cleavage system catalyzes the degradation of glycine. The P protein binds the alpha-amino group of glycine through its pyridoxal phosphate cofactor; CO(2) is released and the remaining methylamine moiety is then transferred to the lipoamide cofactor of the H protein. This chain is Glycine dehydrogenase (decarboxylating) B, mitochondrial (GDCSPB), found in Flaveria pringlei.